The chain runs to 311 residues: Aspartate carbamoyltransferase catalytic subunit (311 aa).

Carbamoyl phosphate contacts are provided by Arg52 and Thr53. Lys80 is an L-aspartate binding site. Residues Arg102, His131, and Gln134 each contribute to the carbamoyl phosphate site. L-aspartate is bound by residues Arg164 and Arg216. Residues Ala259 and Pro260 each coordinate carbamoyl phosphate.

Belongs to the aspartate/ornithine carbamoyltransferase superfamily. ATCase family. In terms of assembly, heterododecamer (2C3:3R2) of six catalytic PyrB chains organized as two trimers (C3), and six regulatory PyrI chains organized as three dimers (R2).

The catalysed reaction is carbamoyl phosphate + L-aspartate = N-carbamoyl-L-aspartate + phosphate + H(+). Its pathway is pyrimidine metabolism; UMP biosynthesis via de novo pathway; (S)-dihydroorotate from bicarbonate: step 2/3. Functionally, catalyzes the condensation of carbamoyl phosphate and aspartate to form carbamoyl aspartate and inorganic phosphate, the committed step in the de novo pyrimidine nucleotide biosynthesis pathway. The protein is Aspartate carbamoyltransferase catalytic subunit of Lactiplantibacillus plantarum (strain ATCC BAA-793 / NCIMB 8826 / WCFS1) (Lactobacillus plantarum).